Reading from the N-terminus, the 396-residue chain is Acetate kinase (396 aa).

Asn8 lines the Mg(2+) pocket. Lys15 provides a ligand contact to ATP. Arg89 is a binding site for substrate. Asp146 acts as the Proton donor/acceptor in catalysis. ATP is bound by residues 206-210, 280-282, and 328-332; these read HLGNG, DMR, and GVGEN. Position 382 (Glu382) interacts with Mg(2+).

Belongs to the acetokinase family. Homodimer. Mg(2+) is required as a cofactor. The cofactor is Mn(2+).

It is found in the cytoplasm. It catalyses the reaction acetate + ATP = acetyl phosphate + ADP. Its pathway is metabolic intermediate biosynthesis; acetyl-CoA biosynthesis; acetyl-CoA from acetate: step 1/2. In terms of biological role, catalyzes the formation of acetyl phosphate from acetate and ATP. Can also catalyze the reverse reaction. The sequence is that of Acetate kinase from Clavibacter michiganensis subsp. michiganensis (strain NCPPB 382).